Here is a 228-residue protein sequence, read N- to C-terminus: Phosphoribosylformylglycinamidine synthase subunit PurQ (228 aa).

One can recognise a Glutamine amidotransferase type-1 domain in the interval 4-226 (AVVVFPGSNC…VNYWRETHVV (223 aa)). Cysteine 86 (nucleophile) is an active-site residue. Catalysis depends on residues histidine 195 and glutamate 197.

In terms of assembly, part of the FGAM synthase complex composed of 1 PurL, 1 PurQ and 2 PurS subunits.

Its subcellular location is the cytoplasm. The enzyme catalyses N(2)-formyl-N(1)-(5-phospho-beta-D-ribosyl)glycinamide + L-glutamine + ATP + H2O = 2-formamido-N(1)-(5-O-phospho-beta-D-ribosyl)acetamidine + L-glutamate + ADP + phosphate + H(+). It catalyses the reaction L-glutamine + H2O = L-glutamate + NH4(+). The protein operates within purine metabolism; IMP biosynthesis via de novo pathway; 5-amino-1-(5-phospho-D-ribosyl)imidazole from N(2)-formyl-N(1)-(5-phospho-D-ribosyl)glycinamide: step 1/2. In terms of biological role, part of the phosphoribosylformylglycinamidine synthase complex involved in the purines biosynthetic pathway. Catalyzes the ATP-dependent conversion of formylglycinamide ribonucleotide (FGAR) and glutamine to yield formylglycinamidine ribonucleotide (FGAM) and glutamate. The FGAM synthase complex is composed of three subunits. PurQ produces an ammonia molecule by converting glutamine to glutamate. PurL transfers the ammonia molecule to FGAR to form FGAM in an ATP-dependent manner. PurS interacts with PurQ and PurL and is thought to assist in the transfer of the ammonia molecule from PurQ to PurL. The sequence is that of Phosphoribosylformylglycinamidine synthase subunit PurQ from Geobacillus kaustophilus (strain HTA426).